Here is a 304-residue protein sequence, read N- to C-terminus: Homoserine kinase (304 aa).

Position 90 to 100 (90 to 100 (PLARGLGSSAS)) interacts with ATP.

This sequence belongs to the GHMP kinase family. Homoserine kinase subfamily.

It localises to the cytoplasm. It carries out the reaction L-homoserine + ATP = O-phospho-L-homoserine + ADP + H(+). It participates in amino-acid biosynthesis; L-threonine biosynthesis; L-threonine from L-aspartate: step 4/5. Functionally, catalyzes the ATP-dependent phosphorylation of L-homoserine to L-homoserine phosphate. The protein is Homoserine kinase of Staphylococcus aureus (strain MSSA476).